Here is a 171-residue protein sequence, read N- to C-terminus: Co-chaperone protein HscB (171 aa).

Positions Asp2 to Leu74 constitute a J domain.

Belongs to the HscB family. As to quaternary structure, interacts with HscA and stimulates its ATPase activity. Interacts with IscU.

In terms of biological role, co-chaperone involved in the maturation of iron-sulfur cluster-containing proteins. Seems to help targeting proteins to be folded toward HscA. In Salmonella paratyphi A (strain AKU_12601), this protein is Co-chaperone protein HscB.